The following is a 146-amino-acid chain: Putative pre-16S rRNA nuclease (146 aa).

The protein belongs to the YqgF nuclease family.

It is found in the cytoplasm. In terms of biological role, could be a nuclease involved in processing of the 5'-end of pre-16S rRNA. The sequence is that of Putative pre-16S rRNA nuclease from Pediococcus pentosaceus (strain ATCC 25745 / CCUG 21536 / LMG 10740 / 183-1w).